Consider the following 1321-residue polypeptide: Serine/threonine-protein kinase SIK3 (1321 aa).

The tract at residues 1–59 is disordered; the sequence is MAAAAASGAGGAAGAGTGGAGPAGRLLPPPAPGSPAAPAAVSPAAGQPRPPAPASRGPM. Positions 8–22 are enriched in gly residues; it reads GAGGAAGAGTGGAGP. A compositionally biased stretch (low complexity) spans 36-47; the sequence is AAPAAVSPAAGQ. The region spanning 66–317 is the Protein kinase domain; that stretch reads YEIDRTIGKG…MEQICKHKWM (252 aa). The residue at position 71 (threonine 71) is a Phosphothreonine. ATP-binding positions include 72-80 and lysine 95; that span reads IGKGNFAVV. Phosphothreonine is present on glutamate 113. The active-site Proton acceptor is aspartate 188. The residue at position 221 (threonine 221) is a Phosphothreonine; by LKB1. Positions 344 to 384 constitute a UBA domain; sequence PLNEDVLLAMEDMGLDKEQTLQSLRSDAYDHYSAIYSLLCD. The residue at position 469 (threonine 469) is a Phosphothreonine. Serine 551, serine 591, and serine 592 each carry phosphoserine. The interval 585–614 is disordered; the sequence is TPVDEESSDGEPDQEAVQSSTYKDSNTLHL. Over residues 587-598 the composition is skewed to acidic residues; sequence VDEESSDGEPDQ. Polar residues predominate over residues 600–613; that stretch reads AVQSSTYKDSNTLH. Serine 626 and serine 647 each carry phosphoserine. The segment at 727–772 is disordered; the sequence is IQPSSPPPNHPNNHLFRQPSNSPPPMSSAMIQPHGAASSSQFQGLP. The span at 763-772 shows a compositional bias: polar residues; that stretch reads ASSSQFQGLP. Serine 866 carries the phosphoserine modification. Residues 894–945 are disordered; it reads LFSDQSRGSPSSYSPSTGVGFSPTQALKVPPLDQFPTFPPSAHQQPPHYTTS. Residues 896 to 909 show a composition bias toward low complexity; that stretch reads SDQSRGSPSSYSPS. A compositionally biased stretch (polar residues) spans 935-945; that stretch reads AHQQPPHYTTS. Residue serine 978 is modified to Phosphoserine. Arginine 986 bears the Omega-N-methylarginine mark. Positions 1256–1265 are enriched in polar residues; sequence SLMGSQQFQD. Positions 1256-1289 are disordered; the sequence is SLMGSQQFQDGENEECGASLGGHEHPDLSDGSQH.

Belongs to the protein kinase superfamily. CAMK Ser/Thr protein kinase family. SNF1 subfamily. In terms of assembly, binds to and is activated by YWHAZ when phosphorylated on Thr-221. Interacts with 14-3-3 proteins. Interacts with HDAC4; this interaction leads to HDAC4 retention in the cytoplasm. Interacts with DEPTOR, MLST8/GbetaL, RICTOR and RPTOR. The cofactor is Mg(2+). In terms of processing, phosphorylated at Thr-221 by STK11/LKB1 in complex with STE20-related adapter-alpha (STRADA) pseudo kinase and CAB39. Phosphorylation at Thr-221 is inhibited in response to PTHLH/PTHrP. Phosphorylated at Thr-469 and Ser-551 in response to cAMP signaling. As to expression, expressed in chondrocytes.

It is found in the cytoplasm. It catalyses the reaction L-seryl-[protein] + ATP = O-phospho-L-seryl-[protein] + ADP + H(+). The catalysed reaction is L-threonyl-[protein] + ATP = O-phospho-L-threonyl-[protein] + ADP + H(+). Activated by phosphorylation on Thr-221. In terms of biological role, positive regulator of mTOR signaling that functions by triggering the degradation of DEPTOR, an mTOR inhibitor. Involved in the dynamic regulation of mTOR signaling in chondrocyte differentiation during skeletogenesis. Negatively regulates cAMP signaling pathway possibly by acting on CRTC2/TORC2 and CRTC3/TORC3. Prevents HDAC4 translocation to the nucleus. The sequence is that of Serine/threonine-protein kinase SIK3 from Homo sapiens (Human).